The following is a 171-amino-acid chain: Siroheme decarboxylase NirH subunit (171 aa).

This sequence belongs to the Ahb/Nir family. As to quaternary structure, probably forms a complex composed of NirD, NirL, NirG and NirH. All proteins are required for the total conversion of siroheme to didecarboxysiroheme.

The catalysed reaction is siroheme + 2 H(+) = 12,18-didecarboxysiroheme + 2 CO2. Its pathway is porphyrin-containing compound metabolism. Functionally, involved in heme d1 biosynthesis. Catalyzes the decarboxylation of siroheme into didecarboxysiroheme. This chain is Siroheme decarboxylase NirH subunit, found in Pseudomonas aeruginosa (strain ATCC 15692 / DSM 22644 / CIP 104116 / JCM 14847 / LMG 12228 / 1C / PRS 101 / PAO1).